Here is a 215-residue protein sequence, read N- to C-terminus: MYEYQEDFIRFALDRGVLRFGRFTLKSGRESPYFFNTGLFNSGTALSKLGRCYVESLVRAQIDFDLVFGPAYKGIPLATAVAMALAETRNRDVPYAFDRKEVKDHGEGGRLVGAPVEGRRAVIVDDVISSGISIREAAELITAEGGTVAAVAIALDRKERGRDEVSAVHEVEQTLGAPVVPIITLDHLETYLADHGGKGDTLDAIRQYRARYGAA.

Residue Lys-26 coordinates 5-phospho-alpha-D-ribose 1-diphosphate. 34 to 35 (FF) contributes to the orotate binding site. Residues 72–73 (YK), Arg-99, Lys-100, Lys-103, His-105, and 125–133 (DDVISSGIS) contribute to the 5-phospho-alpha-D-ribose 1-diphosphate site. 2 residues coordinate orotate: Ser-129 and Arg-157.

Belongs to the purine/pyrimidine phosphoribosyltransferase family. PyrE subfamily. Homodimer. Mg(2+) serves as cofactor.

It carries out the reaction orotidine 5'-phosphate + diphosphate = orotate + 5-phospho-alpha-D-ribose 1-diphosphate. It functions in the pathway pyrimidine metabolism; UMP biosynthesis via de novo pathway; UMP from orotate: step 1/2. Catalyzes the transfer of a ribosyl phosphate group from 5-phosphoribose 1-diphosphate to orotate, leading to the formation of orotidine monophosphate (OMP). The sequence is that of Orotate phosphoribosyltransferase from Halorhodospira halophila (strain DSM 244 / SL1) (Ectothiorhodospira halophila (strain DSM 244 / SL1)).